The following is a 368-amino-acid chain: ATP-dependent (S)-NAD(P)H-hydrate dehydratase (368 aa).

In terms of domain architecture, YjeF C-terminal spans 3–359 (SPSKKLLANV…DEVHGSFLDL (357 aa)). Residues glycine 120 and 173–179 (NVVEFAR) each bind (6S)-NADPHX. ATP contacts are provided by residues 217 to 221 (KGPHD) and 236 to 245 (GGLKRSGGQG). Aspartate 246 contributes to the (6S)-NADPHX binding site.

Belongs to the NnrD/CARKD family. Requires Mg(2+) as cofactor.

It is found in the cytoplasm. The catalysed reaction is (6S)-NADHX + ATP = ADP + phosphate + NADH + H(+). It catalyses the reaction (6S)-NADPHX + ATP = ADP + phosphate + NADPH + H(+). In terms of biological role, catalyzes the dehydration of the S-form of NAD(P)HX at the expense of ATP, which is converted to ADP. Together with NAD(P)HX epimerase, which catalyzes the epimerization of the S- and R-forms, the enzyme allows the repair of both epimers of NAD(P)HX, a damaged form of NAD(P)H that is a result of enzymatic or heat-dependent hydration. The polypeptide is ATP-dependent (S)-NAD(P)H-hydrate dehydratase (Ajellomyces capsulatus (strain G186AR / H82 / ATCC MYA-2454 / RMSCC 2432) (Darling's disease fungus)).